We begin with the raw amino-acid sequence, 398 residues long: NADH-ubiquinone oxidoreductase 49 kDa subunit (398 aa).

It belongs to the complex I 49 kDa subunit family.

It is found in the mitochondrion. The catalysed reaction is a ubiquinone + NADH + 5 H(+)(in) = a ubiquinol + NAD(+) + 4 H(+)(out). Core subunit of the mitochondrial membrane respiratory chain NADH dehydrogenase (Complex I) that is believed to belong to the minimal assembly required for catalysis. Complex I functions in the transfer of electrons from NADH to the respiratory chain. The immediate electron acceptor for the enzyme is believed to be ubiquinone. Component of the iron-sulfur (IP) fragment of the enzyme. Component of the iron-sulfur (IP) fragment of the enzyme. The chain is NADH-ubiquinone oxidoreductase 49 kDa subunit (NAD7) from Pylaiella littoralis (Seaweed).